Here is an 866-residue protein sequence, read N- to C-terminus: Probable outer membrane usher protein ElfC (866 aa).

The first 35 residues, 1 to 35 (MYRTHRQHSLLSSGGVPSFIGGLVVFVSAAFNAQA), serve as a signal peptide directing secretion.

Belongs to the fimbrial export usher family.

The protein localises to the cell outer membrane. Its function is as follows. Part of the elfADCG-ycbUVF fimbrial operon, which promotes adhesion of bacteria to different abiotic surfaces. Could be involved in the export and assembly of the ElfA fimbrial subunits across the outer membrane. The chain is Probable outer membrane usher protein ElfC (elfC) from Escherichia coli (strain K12).